The following is a 522-amino-acid chain: TNF receptor-associated factor 6 (522 aa).

The interval 1 to 354 (MSLLNCENSC…EAQQCNGIYI (354 aa)) is interaction with TAX1BP1. Residues 70–109 (CPICLMALREAVQTPCGHRFCKACIIKSIRDAGHKCPVDN) form an RING-type zinc finger. Residue Lys124 forms a Glycyl lysine isopeptide (Lys-Gly) (interchain with G-Cter in SUMO); alternate linkage. Lys124 participates in a covalent cross-link: Glycyl lysine isopeptide (Lys-Gly) (interchain with G-Cter in ubiquitin); alternate. Lys142 participates in a covalent cross-link: Glycyl lysine isopeptide (Lys-Gly) (interchain with G-Cter in SUMO). 2 consecutive TRAF-type zinc fingers follow at residues 150 to 202 (DHQA…EDKE) and 203 to 259 (IHDQ…NHLA). The stretch at 288–348 (YISEVRNFQE…DKVAEIEAQQ (61 aa)) forms a coiled coil. A Glycyl lysine isopeptide (Lys-Gly) (interchain with G-Cter in ubiquitin) cross-link involves residue Lys319. Residues 350-499 (NGIYIWKIGN…DDTLLVRCEV (150 aa)) form the MATH domain. Residues 355–522 (WKIGNFGMHL…FQPRSTDAGV (168 aa)) are interaction with TANK. Lys453 participates in a covalent cross-link: Glycyl lysine isopeptide (Lys-Gly) (interchain with G-Cter in SUMO).

This sequence belongs to the TNF receptor-associated factor family. A subfamily. Homotrimer. Homooligomer. N-terminal region is dimeric while C-terminal region is trimeric; maybe providing a mode of oligomerization. Upon IL1B treatment, forms a complex with PELI1, IRAK1, IRAK4 and MYD88; this complex recruits MAP3K7/TAK1, TAB1 and TAB2 to mediate NF-kappa-B activation. Direct binding of SMAD6 to PELI1 prevents the complex formation and hence negatively regulates IL1R-TLR signaling and eventually NF-kappa-B-mediated gene expression. Binds to TNFRSF5/CD40 and TNFRSF11A/RANK. Associates with NGFR, TNFRSF17, IRAK2, IRAK3, RIPK2, MAP3K1, MAP3K5, MAP3K14, CSK, TRAF, TRAF-interacting protein TRIP and TNF receptor associated protein TDP2. Interacts with IL17R. Interacts with SQSTM1 bridging NTRK1 and NGFR. Forms a ternary complex with SQSTM1 and PRKCZ. Interacts with PELI2 and PELI3. Binds UBE2V1. Interacts with TAX1BP1; this interaction mediates deubiquitination of TRAF6 and inhibition of NF-kappa-B activation. Interacts with ZNF675. Interacts with ARRB1 and ARRB2. Interacts with MAP3K7 and TAB1/MAP3K7IP1; during IL-1 signaling. Interacts with UBE2N. Interacts with TGFBR1, HDAC1 and RANGAP1. Interacts with AKT1, AKT2 and AKT3. Interacts (via TRAF domains) with NUMBL (via C-terminal). Interacts with RBCK1. Interacts with LIMD1 (via LIM domains). Interacts with RSAD2/viperin. Interacts (via C-terminus) with EIF2AK2/PKR (via the kinase catalytic domain). Interacts with ZFAND5. Interacts with IL1RL1. Interacts with TRAFD1. Interacts with AJUBA. Interacts with MAVS/IPS1. Interacts (via TRAF domains) with DYNC2I2 (via WD domains). Interacts with IFIT3 (via N-terminus). Interacts with TICAM2. Interacts with CARD14. Interacts with CD40 and MAP3K8; the interaction is required for ERK activation. Interacts with TICAM1 and this interaction is enhanced in the presence of WDFY1. Interacts with TANK; this interaction increases in response to DNA damage. Interacts with USP10; this interaction increases in response to DNA damage. Interacts with ZC3H12A; this interaction increases in response to DNA damage and is stimulated by TANK. Interacts with WDFY3. Interacts with TRIM13. Interacts with GPS2. Interacts (via C-terminus) with SASH1. Interacts with LRRC19. Interacts with IL17RA and TRAF3IP2. Interacts with TOMM70. Interacts with AMBRA1; interaction is required to mediate 'Lys-63'-linked ubiquitination of ULK1. Interacts with CRBN; this interaction inhibits TLR4-mediated signaling by preventing TRAF6-mediated ubiquitination of ECSIT. Post-translationally, sumoylated on Lys-124, Lys-142 and Lys-453 with SUMO1. In terms of processing, polyubiquitinated on Lys-124 by TRAF3IP2; after cell stimulation with IL17A. Polyubiquitinated on Lys-124; after cell stimulation with IL1B or TGFB. This ligand-induced cell stimulation leads to dimerization/oligomerization of TRAF6 molecules, followed by auto-ubiquitination which involves UBE2N and UBE2V1 and leads to TRAF6 activation. This 'Lys-63' site-specific poly-ubiquitination appears to be associated with the activation of signaling molecules. Endogenous autoubiquitination occurs only for the cytoplasmic form. Deubiquitinated by USP10 in a TANK-dependent manner, leading to the negative regulation of NF-kappaB signaling upon DNA damage. LRRC19 induces 'Lys-63' ubiquitination. Ubiquitinated at Lys-319 by the SCF(FBXL2) complex, leading to its degradation by the proteasome. (Microbial infection) Deubiquitinated by Epstein-Barr virus BPLF1 on both 'Lys-48' and 'Lys-63'-linked ubiquitin chains; leading to NF-kappa-B signaling inhibition. Expressed in heart, brain, placenta, lung, liver, skeletal muscle, kidney and pancreas.

The protein resides in the cytoplasm. It is found in the cell cortex. Its subcellular location is the nucleus. It localises to the lipid droplet. It catalyses the reaction S-ubiquitinyl-[E2 ubiquitin-conjugating enzyme]-L-cysteine + [acceptor protein]-L-lysine = [E2 ubiquitin-conjugating enzyme]-L-cysteine + N(6)-ubiquitinyl-[acceptor protein]-L-lysine.. It functions in the pathway protein modification; protein ubiquitination. E3 ubiquitin ligase that, together with UBE2N and UBE2V1, mediates the synthesis of 'Lys-63'-linked-polyubiquitin chains conjugated to proteins, such as ECSIT, IKBKG, IRAK1, AKT1 and AKT2. Also mediates ubiquitination of free/unanchored polyubiquitin chain that leads to MAP3K7 activation. Leads to the activation of NF-kappa-B and JUN. Seems to also play a role in dendritic cells (DCs) maturation and/or activation. Represses c-Myb-mediated transactivation, in B-lymphocytes. Adapter protein that seems to play a role in signal transduction initiated via TNF receptor, IL-1 receptor and IL-17 receptor. Regulates osteoclast differentiation by mediating the activation of adapter protein complex 1 (AP-1) and NF-kappa-B, in response to RANK-L stimulation. Together with MAP3K8, mediates CD40 signals that activate ERK in B-cells and macrophages, and thus may play a role in the regulation of immunoglobulin production. Acts as a regulator of the JNK and NF-kappa-B signaling pathways by initiating assembly of heterotypic 'Lys-63'-/'Lys-48'-linked branched ubiquitin chains that are then recognized by TAB2: TRAF6 catalyzes initial 'Lys-63'-linked-polyubiquitin chains that are then branched via 'Lys-48'-linked polyubiquitin by HUWE1. 'Lys-63'-/'Lys-48'-linked branched ubiquitin chains protect 'Lys-63'-linkages from CYLD deubiquitination. Participates also in the TCR signaling by ubiquitinating LAT. This is TNF receptor-associated factor 6 (TRAF6) from Homo sapiens (Human).